We begin with the raw amino-acid sequence, 339 residues long: 1-aminocyclopropane-1-carboxylate deaminase (339 aa).

Lysine 52 carries the N6-(pyridoxal phosphate)lysine modification. The active-site Nucleophile is the serine 79.

The protein belongs to the ACC deaminase/D-cysteine desulfhydrase family. In terms of assembly, homotrimer. It depends on pyridoxal 5'-phosphate as a cofactor.

The enzyme catalyses 1-aminocyclopropane-1-carboxylate + H2O = 2-oxobutanoate + NH4(+). Functionally, catalyzes a cyclopropane ring-opening reaction, the irreversible conversion of 1-aminocyclopropane-1-carboxylate (ACC) to ammonia and alpha-ketobutyrate. Allows growth on ACC as a nitrogen source. This Bradyrhizobium sp. (strain ORS 278) protein is 1-aminocyclopropane-1-carboxylate deaminase.